The primary structure comprises 166 residues: Large ribosomal subunit protein bL19 (166 aa).

It belongs to the bacterial ribosomal protein bL19 family.

Its function is as follows. This protein is located at the 30S-50S ribosomal subunit interface and may play a role in the structure and function of the aminoacyl-tRNA binding site. This is Large ribosomal subunit protein bL19 from Chelativorans sp. (strain BNC1).